The primary structure comprises 877 residues: Envelope glycoprotein gp160 (877 aa).

The signal sequence occupies residues 1-19; that stretch reads MKLTLLIGILLIGIGVVLN. Residues 20–707 are Extracellular-facing; that stretch reads TRQQWVTVFY…SWFDFSKWLN (688 aa). 22 N-linked (GlcNAc...) asparagine; by host glycosylation sites follow: Asn-36, Asn-69, Asn-118, Asn-135, Asn-148, Asn-158, Asn-173, Asn-204, Asn-216, Asn-258, Asn-261, Asn-272, Asn-282, Asn-288, Asn-300, Asn-312, Asn-322, Asn-379, Asn-420, Asn-431, Asn-495, and Asn-498. Cystine bridges form between Cys-102–Cys-224, Cys-109–Cys-215, Cys-114–Cys-174, Cys-237–Cys-267, and Cys-247–Cys-259. A V1 region spans residues 114-173; sequence CVELNSSEPTTTPKSTTASTTNITASTTTLPCVQNKTSTVLESCNETIIEKELNEEPASN. The segment at 174-215 is V2; it reads CTFAMAGYVRDQKKKYSVVWNDAEIMCKKGNNSNRECYMIHC. The V3 stretch occupies residues 317-349; that stretch reads CKRPGNKTVLPVTIMAGLVFHSQRYNTRLRQAW. A disulfide bond links Cys-317 and Cys-350. 2 disulfides stabilise this stretch: Cys-402–Cys-478 and Cys-409–Cys-451. A V4 region spans residues 409–451; sequence CKMDWFLNYLNNRTVDPDHNPCNGTKGKGKAPGPCAQRTYVAC. Positions 494–501 are V5; sequence KNRTNVTL. Residues 544-564 are fusion peptide; sequence VPFVLGFLGFLGAAGTAMGAA. The segment at 607 to 623 is immunosuppression; that stretch reads LNARVTALEKYLEDQAR. N-linked (GlcNAc...) asparagine; by host glycans are attached at residues Asn-652 and Asn-668. The stretch at 668 to 692 forms a coiled coil; that stretch reads NITTQLEEARAQEEKNLDAYQKLSS. Positions 689 to 710 are MPER; binding to GalCer; the sequence is KLSSWSDFWSWFDFSKWLNILK. Residues 708-728 form a helical membrane-spanning segment; the sequence is ILKIGFLDVLGIIGLRLLYTV. Topologically, residues 729–877 are cytoplasmic; the sequence is YSCIARVRQG…VRQGLEGILN (149 aa). A YXXL motif; contains endocytosis signal motif is present at residues 739 to 742; sequence YSPL. Residues 751 to 779 form a disordered region; it reads WKGQPDNAEGPGEGGDKRKNSSEPWQKES.

In terms of assembly, the mature envelope protein (Env) consists of a homotrimer of non-covalently associated gp120-gp41 heterodimers. The resulting complex protrudes from the virus surface as a spike. Interacts with host CD4 and CCR5. Gp120 also interacts with the C-type lectins CD209/DC-SIGN and CLEC4M/DC-SIGNR (collectively referred to as DC-SIGN(R)). As to quaternary structure, the mature envelope protein (Env) consists of a homotrimer of non-covalently associated gp120-gp41 heterodimers. The resulting complex protrudes from the virus surface as a spike. Post-translationally, specific enzymatic cleavages in vivo yield mature proteins. Envelope glycoproteins are synthesized as an inactive precursor that is heavily N-glycosylated and processed likely by host cell furin in the Golgi to yield the mature SU and TM proteins. The cleavage site between SU and TM requires the minimal sequence [KR]-X-[KR]-R.

It is found in the virion membrane. The protein resides in the host cell membrane. It localises to the host endosome membrane. Functionally, the surface protein gp120 (SU) attaches the virus to the host lymphoid cell by binding to the primary receptor CD4. This interaction induces a structural rearrangement creating a high affinity binding site for a chemokine coreceptor like CCR5. This peculiar 2 stage receptor-interaction strategy allows gp120 to maintain the highly conserved coreceptor-binding site in a cryptic conformation, protected from neutralizing antibodies. These changes are transmitted to the transmembrane protein gp41 and are thought to activate its fusogenic potential by unmasking its fusion peptide. In terms of biological role, surface protein gp120 (SU) may target the virus to gut-associated lymphoid tissue (GALT) by binding host ITGA4/ITGB7 (alpha-4/beta-7 integrins), a complex that mediates T-cell migration to the GALT. Interaction between gp120 and ITGA4/ITGB7 would allow the virus to enter GALT early in the infection, infecting and killing most of GALT's resting CD4+ T-cells. This T-cell depletion is believed to be the major insult to the host immune system leading to AIDS. The surface protein gp120 is a ligand for CD209/DC-SIGN and CLEC4M/DC-SIGNR, which are respectively found on dendritic cells (DCs), and on endothelial cells of liver sinusoids and lymph node sinuses. These interactions allow capture of viral particles at mucosal surfaces by these cells and subsequent transmission to permissive cells. DCs are professional antigen presenting cells, critical for host immunity by inducing specific immune responses against a broad variety of pathogens. They act as sentinels in various tissues where they take up antigen, process it, and present it to T-cells following migration to lymphoid organs. SIV subverts the migration properties of dendritic cells to gain access to CD4+ T-cells in lymph nodes. Virus transmission to permissive T-cells occurs either in trans (without DCs infection, through viral capture and transmission), or in cis (following DCs productive infection, through the usual CD4-gp120 interaction), thereby inducing a robust infection. In trans infection, bound virions remain infectious over days and it is proposed that they are not degraded, but protected in non-lysosomal acidic organelles within the DCs close to the cell membrane thus contributing to the viral infectious potential during DCs' migration from the periphery to the lymphoid tissues. On arrival at lymphoid tissues, intact virions recycle back to DCs' cell surface allowing virus transmission to CD4+ T-cells. Virion capture also seems to lead to MHC-II-restricted viral antigen presentation, and probably to the activation of SIV-specific CD4+ cells. Its function is as follows. The transmembrane protein gp41 (TM) acts as a class I viral fusion protein. Under the current model, the protein has at least 3 conformational states: pre-fusion native state, pre-hairpin intermediate state, and post-fusion hairpin state. During fusion of viral and target intracellular membranes, the coiled coil regions (heptad repeats) assume a trimer-of-hairpins structure, positioning the fusion peptide in close proximity to the C-terminal region of the ectodomain. The formation of this structure appears to drive apposition and subsequent fusion of viral and target cell membranes. Complete fusion occurs in host cell endosomes. The virus undergoes clathrin-dependent internalization long before endosomal fusion, thus minimizing the surface exposure of conserved viral epitopes during fusion and reducing the efficacy of inhibitors targeting these epitopes. Membranes fusion leads to delivery of the nucleocapsid into the cytoplasm. Functionally, the envelope glycoprotein gp160 precursor down-modulates cell surface CD4 antigen by interacting with it in the endoplasmic reticulum and blocking its transport to the cell surface. In terms of biological role, the gp120-gp41 heterodimer allows rapid transcytosis of the virus through CD4 negative cells such as simple epithelial monolayers of the intestinal, rectal and endocervical epithelial barriers. Both gp120 and gp41 specifically recognize glycosphingolipids galactosyl-ceramide (GalCer) or 3' sulfo-galactosyl-ceramide (GalS) present in the lipid rafts structures of epithelial cells. Binding to these alternative receptors allows the rapid transcytosis of the virus through the epithelial cells. This transcytotic vesicle-mediated transport of virions from the apical side to the basolateral side of the epithelial cells does not involve infection of the cells themselves. The chain is Envelope glycoprotein gp160 (env) from Cercopithecidae (Old World monkeys).